We begin with the raw amino-acid sequence, 211 residues long: MVFLKFFCMSFFCHLCQGYFDGPLYPEMSNGTLHHYFVPDGDYEENDDPEKCQLLFRVSDHRRCSQGEGSQVGSLLSLTLREEFTVLGRQVEDAGRVLEGISKSISYDLDGEESYGKYLRRESHQIGDAYSNSDKSLTELESKFKQGQEQDSRQESRLNEDFLGMLVHTRSLLKETLDISVGLRDKYELLALTIRSHGTRLGRLKNDYLKV.

Residues 1-18 (MVFLKFFCMSFFCHLCQG) form the signal peptide. Residue Asn30 is glycosylated (N-linked (GlcNAc...) asparagine).

Belongs to the FIBIN family. In terms of assembly, homodimer; disulfide-linked. Seems to also exist as monomers.

It is found in the secreted. It localises to the golgi apparatus. The protein resides in the endoplasmic reticulum. This is Fin bud initiation factor homolog (FIBIN) from Homo sapiens (Human).